The sequence spans 124 residues: Protein MGF 110-4L (124 aa).

A signal peptide spans 1–28 (MLVIFLGILGLLANQVLGLPIQAGGHLC). A glycan (N-linked (GlcNAc...) asparagine; by host) is linked at Asn64. Positions 121 to 124 (KEDL) match the Prevents secretion from ER motif.

Belongs to the asfivirus MGF 110 family.

The protein resides in the virion. The protein localises to the host endoplasmic reticulum-Golgi intermediate compartment. Functionally, causes the redistribution of lumenal ER protein to an enlarged ERGIC compartment. The chain is Protein MGF 110-4L from Ornithodoros (relapsing fever ticks).